Here is a 693-residue protein sequence, read N- to C-terminus: Phosphoribosylformylglycinamidine synthase subunit PurL (693 aa).

His34 is an active-site residue. Positions 37 and 76 each coordinate ATP. Residue Glu78 participates in Mg(2+) binding. Substrate-binding positions include 79–82 and Arg101; that span reads SHNH. His80 functions as the Proton acceptor in the catalytic mechanism. Mg(2+) is bound at residue Asp102. Gln222 provides a ligand contact to substrate. Asp248 contacts Mg(2+). Substrate is bound at residue 292 to 294; that stretch reads ETQ. The ATP site is built by Asp470 and Gly507. Substrate is bound at residue Ser510.

It belongs to the FGAMS family. As to quaternary structure, monomer. Part of the FGAM synthase complex composed of 1 PurL, 1 PurQ and 2 PurS subunits.

The protein localises to the cytoplasm. It catalyses the reaction N(2)-formyl-N(1)-(5-phospho-beta-D-ribosyl)glycinamide + L-glutamine + ATP + H2O = 2-formamido-N(1)-(5-O-phospho-beta-D-ribosyl)acetamidine + L-glutamate + ADP + phosphate + H(+). The protein operates within purine metabolism; IMP biosynthesis via de novo pathway; 5-amino-1-(5-phospho-D-ribosyl)imidazole from N(2)-formyl-N(1)-(5-phospho-D-ribosyl)glycinamide: step 1/2. Functionally, part of the phosphoribosylformylglycinamidine synthase complex involved in the purines biosynthetic pathway. Catalyzes the ATP-dependent conversion of formylglycinamide ribonucleotide (FGAR) and glutamine to yield formylglycinamidine ribonucleotide (FGAM) and glutamate. The FGAM synthase complex is composed of three subunits. PurQ produces an ammonia molecule by converting glutamine to glutamate. PurL transfers the ammonia molecule to FGAR to form FGAM in an ATP-dependent manner. PurS interacts with PurQ and PurL and is thought to assist in the transfer of the ammonia molecule from PurQ to PurL. The sequence is that of Phosphoribosylformylglycinamidine synthase subunit PurL from Pyrobaculum neutrophilum (strain DSM 2338 / JCM 9278 / NBRC 100436 / V24Sta) (Thermoproteus neutrophilus).